A 210-amino-acid polypeptide reads, in one-letter code: Chloramphenicol acetyltransferase (210 aa).

The active site involves histidine 79.

Belongs to the transferase hexapeptide repeat family.

The catalysed reaction is chloramphenicol + acetyl-CoA = chloramphenicol 3-acetate + CoA. Its function is as follows. This enzyme is an effector of chloramphenicol resistance in bacteria. The sequence is that of Chloramphenicol acetyltransferase (catB4) from Klebsiella aerogenes (Enterobacter aerogenes).